The following is a 341-amino-acid chain: MAKGLLVTYALWAVGGPAGLHHLYLGRDSHALLWMLTLGGGGLGWLWEFWKLPSFVAQANRAQGQRQSPRGVTPPLSPIRFAAQVIVGIYFGLVALISLSSMVNFYIVALPLAVGLGVLLVAAVGNQTSDFKNTLGAAFLTSPIFYGRPIAILPISVAASITAQKRRRYKALVASEPLSVRLYRLGLAYLAFTGPLAYSALCNTAATLSYVAETFGSFLNWFSFFPLLGRLMEFVLLLPYRIWRLLMGETGFNSSYFQEWAKLYEFVHSFQDEKRQLAYQVLGLSEGATNEEIHRSYRELVKVWHPDHNLDQTEEAQRHFLEIQAAYEVLSQPRKPRGSRR.

The TM2 domain occupies K3–W50. Helical transmembrane passes span L5–L25, H30–W50, F81–S101, F105–G125, L135–I155, L185–A205, and F218–L238. The region spanning L277 to R341 is the J domain.

The protein localises to the membrane. Its function is as follows. May function as a co-chaperone. The protein is DnaJ homolog subfamily C member 22 (DNAJC22) of Pongo abelii (Sumatran orangutan).